The primary structure comprises 286 residues: Ribose-phosphate pyrophosphokinase (286 aa).

ATP contacts are provided by residues 34 to 36 (DGE) and 91 to 93 (RQH). Residues histidine 124 and aspartate 161 each contribute to the Mg(2+) site. Lysine 184 is an active-site residue. D-ribose 5-phosphate is bound by residues arginine 186, aspartate 210, and 214 to 218 (STGGT).

Belongs to the ribose-phosphate pyrophosphokinase family. Class III (archaeal) subfamily. In terms of assembly, homodimer. Mg(2+) serves as cofactor.

Its subcellular location is the cytoplasm. The enzyme catalyses D-ribose 5-phosphate + ATP = 5-phospho-alpha-D-ribose 1-diphosphate + AMP + H(+). The protein operates within metabolic intermediate biosynthesis; 5-phospho-alpha-D-ribose 1-diphosphate biosynthesis; 5-phospho-alpha-D-ribose 1-diphosphate from D-ribose 5-phosphate (route I): step 1/1. Functionally, involved in the biosynthesis of the central metabolite phospho-alpha-D-ribosyl-1-pyrophosphate (PRPP) via the transfer of pyrophosphoryl group from ATP to 1-hydroxyl of ribose-5-phosphate (Rib-5-P). The polypeptide is Ribose-phosphate pyrophosphokinase (Thermoplasma volcanium (strain ATCC 51530 / DSM 4299 / JCM 9571 / NBRC 15438 / GSS1)).